The primary structure comprises 243 residues: MKHDLETLKHIIDSSNRITFFTGAGVSVASGVPDFRSMGGLFDEISKDGLSPEYLLSRDYLEDDPEGFINFCHKRLLFVDTMPNIVHDWIAKLERNQQSLGIITQNIDGLHSDAGSQHVDELHGTLNRFYCNVCHKSYTKSDVIDRTLKHCDNCGGAIRPDIVLYGEMLDQPTIIRALNKIEHADTLVVLGSSLVVQPAAGLISHFKGDNLIIINKDRTPYDSDATLVIHDDMVSVVKSLMTE.

The region spanning 1 to 243 (MKHDLETLKH…VSVVKSLMTE (243 aa)) is the Deacetylase sirtuin-type domain. The NAD(+) site is built by alanine 24, phenylalanine 35, arginine 36, glutamine 105, isoleucine 107, aspartate 108, and histidine 123. A nicotinamide-binding site is contributed by phenylalanine 35. Residues isoleucine 107 and aspartate 108 each contribute to the nicotinamide site. The active-site Proton acceptor is histidine 123. Cysteine 131, cysteine 134, cysteine 151, and cysteine 154 together coordinate Zn(2+). 4 residues coordinate NAD(+): serine 192, serine 193, asparagine 215, and aspartate 232.

The protein belongs to the sirtuin family. Class U subfamily. Zn(2+) is required as a cofactor.

It localises to the cytoplasm. The enzyme catalyses N(6)-acetyl-L-lysyl-[protein] + NAD(+) + H2O = 2''-O-acetyl-ADP-D-ribose + nicotinamide + L-lysyl-[protein]. In terms of biological role, NAD-dependent protein deacetylase which modulates the activities of several enzymes which are inactive in their acetylated form. The protein is NAD-dependent protein deacetylase of Staphylococcus aureus (strain COL).